Reading from the N-terminus, the 252-residue chain is Small ribosomal subunit protein eS4 (252 aa).

Positions 43 to 106 constitute an S4 RNA-binding domain; it reads LPLLILVRDM…NKYYRVIPVP (64 aa).

Belongs to the eukaryotic ribosomal protein eS4 family.

The sequence is that of Small ribosomal subunit protein eS4 from Desulfurococcus amylolyticus (strain DSM 18924 / JCM 16383 / VKM B-2413 / 1221n) (Desulfurococcus kamchatkensis).